The chain runs to 155 residues: Polyadenylate-binding protein-interacting protein 5 (155 aa).

The PAM2-like signature appears at 7–17 (ALNPHAASYVP). Residues 66-109 (DIDMDIEYLLVTFSGLSQESITDVYLANGGDLEATIEMLNQLEI) enclose the CUE domain. The interval 114-155 (SEENLPETLDIGDISESGPSTSKSTEVAASTSSVIPNAPVSA) is disordered. The span at 130 to 148 (SGPSTSKSTEVAASTSSVI) shows a compositional bias: polar residues.

Specifically expressed in immature siliques.

Functionally, promotes polyploidy in dark-grown seedlings. Regulates the endocycle leading to hypocotyl elongation. In Arabidopsis thaliana (Mouse-ear cress), this protein is Polyadenylate-binding protein-interacting protein 5 (CID5).